A 336-amino-acid polypeptide reads, in one-letter code: tRNA N6-adenosine threonylcarbamoyltransferase (336 aa).

Fe cation-binding residues include His-114 and His-118. Substrate is bound by residues 136 to 140 (LVSGG), Asp-169, Gly-182, Asp-186, and Asn-275. Asp-301 lines the Fe cation pocket.

The protein belongs to the KAE1 / TsaD family. Fe(2+) serves as cofactor.

Its subcellular location is the cytoplasm. It catalyses the reaction L-threonylcarbamoyladenylate + adenosine(37) in tRNA = N(6)-L-threonylcarbamoyladenosine(37) in tRNA + AMP + H(+). Required for the formation of a threonylcarbamoyl group on adenosine at position 37 (t(6)A37) in tRNAs that read codons beginning with adenine. Is involved in the transfer of the threonylcarbamoyl moiety of threonylcarbamoyl-AMP (TC-AMP) to the N6 group of A37, together with TsaE and TsaB. TsaD likely plays a direct catalytic role in this reaction. The protein is tRNA N6-adenosine threonylcarbamoyltransferase of Streptococcus pneumoniae (strain ATCC 700669 / Spain 23F-1).